We begin with the raw amino-acid sequence, 67 residues long: Cell division protein ZapB (67 aa).

Positions 3 to 59 form a coiled coil; it reads LELLSKLETKIQAALETIELLKMELEEEKQTSSSLSEQNQQLQQELTSWNEKVTGLV.

This sequence belongs to the ZapB family. Homodimer. The ends of the coiled-coil dimer bind to each other, forming polymers. Interacts with FtsZ.

It is found in the cytoplasm. Non-essential, abundant cell division factor that is required for proper Z-ring formation. It is recruited early to the divisome by direct interaction with FtsZ, stimulating Z-ring assembly and thereby promoting cell division earlier in the cell cycle. Its recruitment to the Z-ring requires functional FtsA or ZipA. The chain is Cell division protein ZapB from Shewanella halifaxensis (strain HAW-EB4).